The chain runs to 585 residues: UvrABC system protein C (585 aa).

The region spanning 15–90 (AEPGVYQFLE…IKRHQPRYNV (76 aa)) is the GIY-YIG domain. The region spanning 198 to 233 (GILADPLRQEMQAAATAEEFERAANIRDRLAVIESF) is the UVR domain.

Belongs to the UvrC family. As to quaternary structure, interacts with UvrB in an incision complex.

It is found in the cytoplasm. The UvrABC repair system catalyzes the recognition and processing of DNA lesions. UvrC both incises the 5' and 3' sides of the lesion. The N-terminal half is responsible for the 3' incision and the C-terminal half is responsible for the 5' incision. This chain is UvrABC system protein C, found in Haloquadratum walsbyi (strain DSM 16790 / HBSQ001).